The chain runs to 116 residues: Tachykinin-3 (116 aa).

An N-terminal signal peptide occupies residues 1–20 (MRSAMLFAAVLALSLAWTFG). The propeptide occupies 21–79 (AACEEPQEQGGRLSKDSDLSLLPPPLLRRLYDSRSISLEGLLKVLSKASVGPKETSLPQ). Methionine 91 is subject to Methionine amide. The segment at 92–116 (GKRNSQPDTPADVVEENTPSFGVLK) is disordered. Positions 95–116 (NSQPDTPADVVEENTPSFGVLK) are excised as a propeptide.

Belongs to the tachykinin family.

It localises to the secreted. Tachykinins are active peptides which excite neurons, evoke behavioral responses, are potent vasodilators and secretagogues, and contract (directly or indirectly) many smooth muscles. Is a critical central regulator of gonadal function. The protein is Tachykinin-3 (Tac3) of Rattus norvegicus (Rat).